The following is a 289-amino-acid chain: Secretory carrier-associated membrane protein (289 aa).

The segment at 1–65 (MAGRYDPNPF…TSTDGKKKER (65 aa)) is disordered. Residues 1–123 (MAGRYDPNPF…EIPIHLRTLQ (123 aa)) lie on the Cytoplasmic side of the membrane. Polar residues predominate over residues 16 to 31 (NPFSNPRSAASATNSR). Residues 59 to 98 (DGKKKERDLQAKEAELRKREQEVRRKEEAIARAGIVIEEK) adopt a coiled-coil conformation. 4 helical membrane passes run 124–144 (YVAFFSLLGLVLCLTWNVVSV), 156–176 (IWFLAIIYFIAGVPGAYALWY), 191–211 (FGWFFMFYLLHIGFCILAAVA), and 239–259 (IFYFIGFGFFCLETLISIWVI). Topologically, residues 260-289 (QQVYMHFRGGGKTAEMKREAALGAMGAALR) are cytoplasmic.

The protein belongs to the SCAMP family.

It is found in the cell membrane. The protein localises to the cytoplasmic vesicle. The protein resides in the secretory vesicle membrane. Functionally, probably involved in membrane trafficking. In Pisum sativum (Garden pea), this protein is Secretory carrier-associated membrane protein (PSAM2).